The sequence spans 223 residues: ATP-dependent dethiobiotin synthetase BioD (223 aa).

T16 is a Mg(2+) binding site. The active site involves K37. S41 contributes to the substrate binding site. Mg(2+) contacts are provided by D50 and E111. ATP contacts are provided by residues D50, E111–G114, N171–Q172, A201–V203, and E208.

The protein belongs to the dethiobiotin synthetase family. In terms of assembly, homodimer. Mg(2+) serves as cofactor.

It is found in the cytoplasm. It catalyses the reaction (7R,8S)-7,8-diammoniononanoate + CO2 + ATP = (4R,5S)-dethiobiotin + ADP + phosphate + 3 H(+). The protein operates within cofactor biosynthesis; biotin biosynthesis; biotin from 7,8-diaminononanoate: step 1/2. Functionally, catalyzes a mechanistically unusual reaction, the ATP-dependent insertion of CO2 between the N7 and N8 nitrogen atoms of 7,8-diaminopelargonic acid (DAPA, also called 7,8-diammoniononanoate) to form a ureido ring. The polypeptide is ATP-dependent dethiobiotin synthetase BioD (Anaeromyxobacter sp. (strain Fw109-5)).